We begin with the raw amino-acid sequence, 159 residues long: Large ribosomal subunit protein uL13 (159 aa).

This sequence belongs to the universal ribosomal protein uL13 family. As to quaternary structure, part of the 50S ribosomal subunit.

This protein is one of the early assembly proteins of the 50S ribosomal subunit, although it is not seen to bind rRNA by itself. It is important during the early stages of 50S assembly. The polypeptide is Large ribosomal subunit protein uL13 (Methanopyrus kandleri (strain AV19 / DSM 6324 / JCM 9639 / NBRC 100938)).